The following is a 379-amino-acid chain: RNA-splicing ligase RtcB2 (379 aa).

Asp-74, Cys-77, His-137, His-168, and His-239 together coordinate Mn(2+). GMP is bound at residue 136 to 140 (NHFVE). GMP-binding positions include 239-240 (HN), Ser-277, 294-297 (HGAG), and Lys-372. His-294 functions as the GMP-histidine intermediate in the catalytic mechanism.

This sequence belongs to the RtcB family. RtcB2 subfamily. Mn(2+) serves as cofactor.

The enzyme catalyses a 3'-end 3'-phospho-ribonucleotide-RNA + a 5'-end dephospho-ribonucleoside-RNA + GTP = a ribonucleotidyl-ribonucleotide-RNA + GMP + diphosphate. Its function is as follows. GTP-dependent RNA ligase involved in rRNA repair. Repairs damaged 16S rRNA in 30S subunits that has been cleaved between adenine-1493 and guanosine-1494 (E.coli nubering). This specific cleavage is inflicted by CdiA (ECL_04451) or by colicin E3-type (ColE3) proteins. Poorly repairs damaged rRNA in the 70S ribosome; addition of release factor PrfH improves repair about 3-fold in vitro, probably because PrfH hydrolyzes the nascent chain allowing ribosomal subunit dissociation. In vivo the PrfH-RtcB2 pair restores growth in the presence of ribotoxins that specifically create this damage. Does not repair damaged tRNA (tested with tRNA(Asp) and tRNA(Arg)). The sequence is that of RNA-splicing ligase RtcB2 from Escherichia coli (strain ATCC 25922 / DSM 1103 / LMG 8223 / NCIMB 12210 / NCTC 12241 / WDCM 00013 / Seattle 1946).